We begin with the raw amino-acid sequence, 638 residues long: Threonine--tRNA ligase (638 aa).

A TGS domain is found at 1–61 (MPVITLPDGS…EHDARIEIVT (61 aa)). A catalytic region spans residues 243–534 (DHRKIAKAQD…LIEEYAGHFP (292 aa)). Zn(2+) is bound by residues cysteine 334, histidine 385, and histidine 511.

Belongs to the class-II aminoacyl-tRNA synthetase family. As to quaternary structure, homodimer. Requires Zn(2+) as cofactor.

It is found in the cytoplasm. The enzyme catalyses tRNA(Thr) + L-threonine + ATP = L-threonyl-tRNA(Thr) + AMP + diphosphate + H(+). Its function is as follows. Catalyzes the attachment of threonine to tRNA(Thr) in a two-step reaction: L-threonine is first activated by ATP to form Thr-AMP and then transferred to the acceptor end of tRNA(Thr). Also edits incorrectly charged L-seryl-tRNA(Thr). The protein is Threonine--tRNA ligase of Idiomarina loihiensis (strain ATCC BAA-735 / DSM 15497 / L2-TR).